The sequence spans 340 residues: Protein RecA (340 aa).

66 to 73 (GPESSGKT) is an ATP binding site.

This sequence belongs to the RecA family.

The protein resides in the cytoplasm. In terms of biological role, can catalyze the hydrolysis of ATP in the presence of single-stranded DNA, the ATP-dependent uptake of single-stranded DNA by duplex DNA, and the ATP-dependent hybridization of homologous single-stranded DNAs. It interacts with LexA causing its activation and leading to its autocatalytic cleavage. This Rickettsia prowazekii (strain Madrid E) protein is Protein RecA.